Reading from the N-terminus, the 725-residue chain is Endoglucanase G (725 aa).

The N-terminal stretch at 1–35 (MLKTKRKLTKAIGVALSISILSSLVSFIPQTNTYA) is a signal peptide. Asp93 functions as the Nucleophile in the catalytic mechanism. Catalysis depends on residues His408, Asp446, and Glu455. In terms of domain architecture, CBM3 spans 489–650 (ITNDEVIIKA…GVKVFGNEPA (162 aa)). Positions 658-724 (PEILYGDVNS…LLGTITQLPQ (67 aa)) constitute a Dockerin domain.

This sequence belongs to the glycosyl hydrolase 9 (cellulase E) family.

The catalysed reaction is Endohydrolysis of (1-&gt;4)-beta-D-glucosidic linkages in cellulose, lichenin and cereal beta-D-glucans.. It participates in glycan metabolism; cellulose degradation. Functionally, the biological conversion of cellulose to glucose generally requires three types of hydrolytic enzymes: (1) Endoglucanases which cut internal beta-1,4-glucosidic bonds; (2) Exocellobiohydrolases that cut the disaccharide cellobiose from the non-reducing end of the cellulose polymer chain; (3) Beta-1,4-glucosidases which hydrolyze the cellobiose and other short cello-oligosaccharides to glucose. The chain is Endoglucanase G (celCCG) from Ruminiclostridium cellulolyticum (strain ATCC 35319 / DSM 5812 / JCM 6584 / H10) (Clostridium cellulolyticum).